Reading from the N-terminus, the 836-residue chain is Probable RING finger protein 207 homolog (836 aa).

An RING-type zinc finger spans residues 8–42 (CTICKNDFEEPILFSCQHTTCRKCSNGSPSCKTCS). The B box-type 1; atypical zinc finger occupies 68 to 115 (EEMEQCANCEQITLPMFYCETCQQSLCLACRNVTHQARMFSSHKIISS). Residues Cys-73, Cys-76, Cys-97, and His-102 each coordinate Zn(2+). The B box-type 2; degenerate zinc-finger motif lies at 122-164 (YSSSLCKDHNEPYILYCSDVRKLVCIQCFNGRPLEERHSFISI). A coiled-coil region spans residues 527 to 557 (QNRIMAIEKEEENRRLNQEAKKKEELAGQSA). A compositionally biased stretch (basic and acidic residues) spans 540–552 (RRLNQEAKKKEEL). Residues 540–571 (RRLNQEAKKKEELAGQSAAMKSLKHGKTKRKE) are disordered. The span at 561–571 (SLKHGKTKRKE) shows a compositional bias: basic residues.

The polypeptide is Probable RING finger protein 207 homolog (Caenorhabditis briggsae).